Reading from the N-terminus, the 177-residue chain is Protein CutA 1, chloroplastic (177 aa).

The N-terminal 60 residues, 1–60, are a transit peptide targeting the chloroplast; the sequence is MPLLPSPLGSLSAAATAAPRRAAAAAGLSPLLLRRRAPIAGALLFLSLGAFAGVRSLSSS.

The protein belongs to the CutA family. Homotrimer.

The protein localises to the plastid. It is found in the chloroplast. The polypeptide is Protein CutA 1, chloroplastic (CUTA1) (Oryza sativa subsp. japonica (Rice)).